The following is a 622-amino-acid chain: MQAHLSHQPCWSSLPSPSVREAASMYGTAVAIFLVILVAALRGSEPPESPFPYHIPLDPEGILELSWNVSYVQEIIHFQLQVQGLRAGVLFGMSDRGEMENADLIMLWTDGDRAYFADAWSDRKGQIHLDSQQDYQLLQAQRTRDGLSLLFKRPFVTCDPKDYVIEDDTVHLVYGILEEPFQSLEAINTSGLHTGLQRVQLLKSEVPTPSMPEDVQTMDIRAPDILIPDNETTYWCYITELPPRFPRHHIIMYEAIVTEGNEALVHHMEVFQCAAESEDFPQFNGPCDSKMKPDRLNYCRHVLAAWALGAKAFYYPKEAGVPFGGPGSSPFLRLEVHYHNPRKIQGRQDSSGIRLHYTATLRRYDAGIMELGLVYTPLMAIPPQETAFVLTGYCTDKCTQMALQDSGIHIFASQLHTHLTGRKVVTVLARDGQERKVVNRDNHYSPHFQEIRMLKKVVTVYPGDVLITSCTYNTENKTLATVGGFGILEEMCVNYVHYYPQTELELCKSAVDDGFLQKYFHMVNRFSSEEVCTCPQASVPQQFSSVPWNSFNRDMLKALYDYAPISMHCNKTSAVRFPGEWNLQPLPKITSTLEEPTPRCPIRQTQSPANPTVPITTEADAE.

Residues 1-20 (MQAHLSHQPCWSSLPSPSVR) are Cytoplasmic-facing. Residues 21–41 (EAASMYGTAVAIFLVILVAAL) traverse the membrane as a helical; Signal-anchor for type II membrane protein segment. At 42–621 (RGSEPPESPF…TVPITTEADA (580 aa)) the chain is on the intragranular side. The DOMON domain occupies 61–177 (GILELSWNVS…DTVHLVYGIL (117 aa)). N-linked (GlcNAc...) asparagine glycosylation is found at N68 and N188. 6 disulfide bridges follow: C158/C600, C236/C287, C273/C299, C394/C507, C398/C569, and C470/C492. Y234 is an active-site residue. H266 and H267 together coordinate Cu(2+). H337 is a binding site for Cu(2+). S350 carries the phosphoserine; by CaMK modification. H416 is an active-site residue. 2 residues coordinate Cu(2+): H416 and H418. N-linked (GlcNAc...) asparagine glycosylation is present at N476. Residue M491 participates in Cu(2+) binding. Residue N570 is glycosylated (N-linked (GlcNAc...) asparagine). The segment at 594-622 (EEPTPRCPIRQTQSPANPTVPITTEADAE) is disordered. Residues 603 to 615 (RQTQSPANPTVPI) show a composition bias toward polar residues.

Belongs to the copper type II ascorbate-dependent monooxygenase family. As to quaternary structure, homotetramer; composed of two disulfide-linked dimers. The cofactor is Cu(2+). Post-translationally, proteolytic cleavage after the membrane-anchor leads to the release of the soluble form. N-glycosylated. As to expression, detected in adrenal gland secretory granules (at protein level). Detected in adrenal gland.

It localises to the cytoplasmic vesicle. It is found in the secretory vesicle lumen. Its subcellular location is the secretory vesicle. The protein resides in the chromaffin granule lumen. The protein localises to the secretory vesicle membrane. It localises to the chromaffin granule membrane. The catalysed reaction is dopamine + 2 L-ascorbate + O2 = (R)-noradrenaline + 2 monodehydro-L-ascorbate radical + H2O. It participates in catecholamine biosynthesis; (R)-noradrenaline biosynthesis; (R)-noradrenaline from dopamine: step 1/1. Its function is as follows. Catalyzes the hydroxylation of dopamine to noradrenaline (also known as norepinephrine), and is thus vital for regulation of these neurotransmitters. In Mus musculus (Mouse), this protein is Dopamine beta-hydroxylase (Dbh).